The primary structure comprises 458 residues: BTB/POZ domain-containing protein At5g41330 (458 aa).

One can recognise a BTB domain in the interval 11-72; the sequence is NVVSINVGGR…LRTGNLPARS (62 aa). WD repeat units follow at residues 259–305, 360–399, and 421–458; these read DSAI…MVWE, LNER…LVGN, and SGEN…GISI.

It functions in the pathway protein modification; protein ubiquitination. May act as a substrate-specific adapter of an E3 ubiquitin-protein ligase complex (CUL3-RBX1-BTB) which mediates the ubiquitination and subsequent proteasomal degradation of target proteins. The sequence is that of BTB/POZ domain-containing protein At5g41330 from Arabidopsis thaliana (Mouse-ear cress).